The following is a 372-amino-acid chain: Mevalonate 3,5-bisphosphate decarboxylase (372 aa).

This sequence belongs to the mevalonate 3,5-bisphosphate decarboxylase family. In terms of assembly, homodimer.

The catalysed reaction is (R)-3,5-bisphosphomevalonate + H(+) = isopentenyl phosphate + phosphate + CO2. It functions in the pathway isoprenoid biosynthesis; isopentenyl diphosphate biosynthesis via mevalonate pathway. Its function is as follows. Catalyzes the ATP-independent decarboxylation of (R)-mevalonate 3,5-bisphosphate to isopentenyl phosphate. Functions in an alternative mevalonate pathway, only present in extreme acidophiles of the Thermoplasmatales order, which passes through mevalonate 3-phosphate rather than mevalonate 5-phosphate. The sequence is that of Mevalonate 3,5-bisphosphate decarboxylase from Thermoplasma volcanium (strain ATCC 51530 / DSM 4299 / JCM 9571 / NBRC 15438 / GSS1).